Here is a 241-residue protein sequence, read N- to C-terminus: Carboxy-S-adenosyl-L-methionine synthase (241 aa).

S-adenosyl-L-methionine contacts are provided by residues Tyr-38, 63–65, 88–89, 116–117, Asn-131, and Arg-198; these read GCS, DN, and DI.

It belongs to the class I-like SAM-binding methyltransferase superfamily. Cx-SAM synthase family. In terms of assembly, homodimer.

It catalyses the reaction prephenate + S-adenosyl-L-methionine = carboxy-S-adenosyl-L-methionine + 3-phenylpyruvate + H2O. Functionally, catalyzes the conversion of S-adenosyl-L-methionine (SAM) to carboxy-S-adenosyl-L-methionine (Cx-SAM). This Haemophilus influenzae (strain 86-028NP) protein is Carboxy-S-adenosyl-L-methionine synthase.